The sequence spans 267 residues: Thymidylate synthase (267 aa).

Position 25 (Arg25) interacts with dUMP. His55 contacts (6R)-5,10-methylene-5,6,7,8-tetrahydrofolate. DUMP is bound at residue 130–131 (RR). The active-site Nucleophile is the Cys150. Residues 170–173 (RSAD), Asn181, and 211–213 (HIY) contribute to the dUMP site. Asp173 provides a ligand contact to (6R)-5,10-methylene-5,6,7,8-tetrahydrofolate. Ala266 is a (6R)-5,10-methylene-5,6,7,8-tetrahydrofolate binding site.

It belongs to the thymidylate synthase family. Bacterial-type ThyA subfamily. As to quaternary structure, homodimer.

Its subcellular location is the cytoplasm. It catalyses the reaction dUMP + (6R)-5,10-methylene-5,6,7,8-tetrahydrofolate = 7,8-dihydrofolate + dTMP. It participates in pyrimidine metabolism; dTTP biosynthesis. Functionally, catalyzes the reductive methylation of 2'-deoxyuridine-5'-monophosphate (dUMP) to 2'-deoxythymidine-5'-monophosphate (dTMP) while utilizing 5,10-methylenetetrahydrofolate (mTHF) as the methyl donor and reductant in the reaction, yielding dihydrofolate (DHF) as a by-product. This enzymatic reaction provides an intracellular de novo source of dTMP, an essential precursor for DNA biosynthesis. The chain is Thymidylate synthase from Corynebacterium efficiens (strain DSM 44549 / YS-314 / AJ 12310 / JCM 11189 / NBRC 100395).